A 198-amino-acid chain; its full sequence is Myb-related protein 340 (198 aa).

HTH myb-type domains follow at residues 10-62 and 63-117; these read DVEV…LNYL and RPDV…IQKH. 2 consecutive DNA-binding regions (H-T-H motif) follow at residues 38–62 and 90–113; these read WNTI…LNYL and WSKI…NRTR.

In terms of tissue distribution, expressed only in flowers.

It is found in the nucleus. In terms of biological role, transcription factor. The chain is Myb-related protein 340 from Antirrhinum majus (Garden snapdragon).